Reading from the N-terminus, the 201-residue chain is Potassium-transporting ATPase KdpC subunit (201 aa).

The chain crosses the membrane as a helical span at residues 17–37 (LLTGLAYPLAMTGLAGILFPV).

The protein belongs to the KdpC family. In terms of assembly, the system is composed of three essential subunits: KdpA, KdpB and KdpC.

It localises to the cell inner membrane. Functionally, part of the high-affinity ATP-driven potassium transport (or Kdp) system, which catalyzes the hydrolysis of ATP coupled with the electrogenic transport of potassium into the cytoplasm. This subunit acts as a catalytic chaperone that increases the ATP-binding affinity of the ATP-hydrolyzing subunit KdpB by the formation of a transient KdpB/KdpC/ATP ternary complex. The protein is Potassium-transporting ATPase KdpC subunit of Methylobacterium nodulans (strain LMG 21967 / CNCM I-2342 / ORS 2060).